A 976-amino-acid polypeptide reads, in one-letter code: Mast/stem cell growth factor receptor Kit (976 aa).

A signal peptide spans 1–25 (MRGARGAWDFLCVLLLLLRVQTGSS). Residues 26 to 524 (QPSVSPGEPS…QIHPHTLFTP (499 aa)) are Extracellular-facing. Ig-like C2-type domains follow at residues 27 to 112 (PSVS…VFVR), 121 to 205 (DRSL…LKVR), 212 to 308 (PVVS…LEVV), 317 to 410 (PMIN…VYVN), and 413 to 507 (PEIL…FNFA). The cysteines at positions 58 and 97 are disulfide-linked. N-linked (GlcNAc...) asparagine glycosylation is found at asparagine 130 and asparagine 145. Cystine bridges form between cysteine 136-cysteine 186, cysteine 151-cysteine 183, and cysteine 233-cysteine 290. Asparagine 283, asparagine 293, asparagine 300, asparagine 320, asparagine 352, asparagine 367, asparagine 463, and asparagine 486 each carry an N-linked (GlcNAc...) asparagine glycan. Cysteine 428 and cysteine 491 are oxidised to a cystine. Residues 525–545 (LLIGFVIVAGMMCIIVMILTY) traverse the membrane as a helical segment. Residues 546 to 976 (KYLQKPMYEV…SQPLLVHDDV (431 aa)) lie on the Cytoplasmic side of the membrane. Tyrosine 547, tyrosine 553, tyrosine 568, and tyrosine 570 each carry phosphotyrosine; by autocatalysis. Tyrosine 568 serves as a coordination point for Mg(2+). The segment at 568 to 570 (YVY) is important for interaction with phosphotyrosine-binding proteins. Residues 589–937 (LSFGKTLGAG…ISESTNHIYS (349 aa)) enclose the Protein kinase domain. ATP is bound by residues 596-603 (GAGAFGKV), lysine 623, and 671-677 (EYCCYGD). Tyrosine 703, tyrosine 721, and tyrosine 730 each carry phosphotyrosine; by autocatalysis. 2 positions are modified to phosphoserine; by PKC/PRKCA: serine 741 and serine 746. The Proton acceptor role is filled by aspartate 792. Residue arginine 796 participates in ATP binding. 2 residues coordinate Mg(2+): asparagine 797 and aspartate 810. Serine 821 carries the post-translational modification Phosphoserine. Tyrosine 823 carries the post-translational modification Phosphotyrosine; by autocatalysis. At serine 891 the chain carries Phosphoserine. A phosphotyrosine; by autocatalysis mark is found at tyrosine 900 and tyrosine 936. Serine 959 is modified (phosphoserine).

This sequence belongs to the protein kinase superfamily. Tyr protein kinase family. CSF-1/PDGF receptor subfamily. As to quaternary structure, monomer in the absence of bound KITLG/SCF. Homodimer in the presence of bound KITLG/SCF, forming a heterotetramer with two KITLG/SCF molecules. Interacts (via phosphorylated tyrosine residues) with the adapter proteins GRB2 and GRB7 (via SH2 domain), and SH2B2/APS. Interacts (via C-terminus) with MPDZ (via the tenth PDZ domain). Interacts (via phosphorylated tyrosine residues) with PIK3R1 and PIK3 catalytic subunit. Interacts (via phosphorylated tyrosine) with CRK (isoform Crk-II), FYN, SHC1 and MATK/CHK (via SH2 domain). Interacts with LYN and FES/FPS. Interacts (via phosphorylated tyrosine residues) with the protein phosphatases PTPN6/SHP-1 (via SH2 domain), PTPN11/SHP-2 (via SH2 domain) and PTPRU. Interacts with PLCG1. Interacts with DOK1 and TEC. Interacts (KITLG/SCF-bound) with IL1RL1. Interacts with IL1RAP (independent of stimulation with KITLG/SCF). A mast cell-specific KITLG/SCF-induced interleukin-33 signaling complex contains IL1RL1, IL1RAP, KIT and MYD88. Post-translationally, ubiquitinated by SOCS6. KIT is rapidly ubiquitinated after autophosphorylation induced by KITLG/SCF binding, leading to internalization and degradation. Autophosphorylated on tyrosine residues. KITLG/SCF binding enhances autophosphorylation. Isoform 1 shows low levels of tyrosine phosphorylation in the absence of added KITLG/SCF (in vitro). Kinase activity is down-regulated by phosphorylation on serine residues by protein kinase C family members. Phosphorylation at Tyr-568 is required for interaction with PTPN11/SHP-2, CRK (isoform Crk-II) and members of the SRC tyrosine-protein kinase family. Phosphorylation at Tyr-570 is required for interaction with PTPN6/SHP-1. Phosphorylation at Tyr-703, Tyr-823 and Tyr-936 is important for interaction with GRB2. Phosphorylation at Tyr-721 is important for interaction with PIK3R1. Phosphorylation at Tyr-823 and Tyr-936 is important for interaction with GRB7. As to expression, in testis, detected in spermatogonia in the basal layer and in interstitial Leydig cells but not in Sertoli cells or spermatocytes inside the seminiferous tubules (at protein level). Expression is maintained in ejaculated spermatozoa (at protein level).

The protein localises to the cell membrane. Its subcellular location is the cytoplasm. It carries out the reaction L-tyrosyl-[protein] + ATP = O-phospho-L-tyrosyl-[protein] + ADP + H(+). Its activity is regulated as follows. Present in an inactive conformation in the absence of bound ligand. KITLG/SCF binding leads to dimerization and activation by autophosphorylation on tyrosine residues. Activity is down-regulated by PRKCA-mediated phosphorylation on serine residues. Inhibited by imatinib/STI-571 (Gleevec) and sunitinib; these compounds maintain the kinase in an inactive conformation. In terms of biological role, tyrosine-protein kinase that acts as a cell-surface receptor for the cytokine KITLG/SCF and plays an essential role in the regulation of cell survival and proliferation, hematopoiesis, stem cell maintenance, gametogenesis, mast cell development, migration and function, and in melanogenesis. In response to KITLG/SCF binding, KIT can activate several signaling pathways. Phosphorylates PIK3R1, PLCG1, SH2B2/APS and CBL. Activates the AKT1 signaling pathway by phosphorylation of PIK3R1, the regulatory subunit of phosphatidylinositol 3-kinase. Activated KIT also transmits signals via GRB2 and activation of RAS, RAF1 and the MAP kinases MAPK1/ERK2 and/or MAPK3/ERK1. Promotes activation of STAT family members STAT1, STAT3, STAT5A and STAT5B. Activation of PLCG1 leads to the production of the cellular signaling molecules diacylglycerol and inositol 1,4,5-trisphosphate. KIT signaling is modulated by protein phosphatases, and by rapid internalization and degradation of the receptor. Activated KIT promotes phosphorylation of the protein phosphatases PTPN6/SHP-1 and PTPRU, and of the transcription factors STAT1, STAT3, STAT5A and STAT5B. Promotes phosphorylation of PIK3R1, CBL, CRK (isoform Crk-II), LYN, MAPK1/ERK2 and/or MAPK3/ERK1, PLCG1, SRC and SHC1. The chain is Mast/stem cell growth factor receptor Kit (KIT) from Homo sapiens (Human).